The primary structure comprises 267 residues: CD82 antigen (267 aa).

Residues 1–11 (MGSACIKVTKY) are Cytoplasmic-facing. Cysteine 5 is lipidated: S-palmitoyl cysteine. The helical transmembrane segment at 12 to 32 (FLFLFNLIFFILGAVILGFGV) threads the bilayer. The Extracellular segment spans residues 33–53 (WILADKSSFISVLQTSSSSLR). Residues 54–72 (MGAYVFIGVGAVTMLMGFL) traverse the membrane as a helical segment. The Cytoplasmic segment spans residues 73–83 (GCIGAVNEVRC). Cysteine 74 carries S-palmitoyl cysteine lipidation. A helical transmembrane segment spans residues 84-110 (LLGLYFAFLLLILIAQVTAGALFYFNM). Residues 111-228 (GKLKQEMGGI…KVQAWLQENL (118 aa)) lie on the Extracellular side of the membrane. N-linked (GlcNAc...) asparagine glycans are attached at residues asparagine 129, asparagine 157, and asparagine 198. A helical membrane pass occupies residues 229–250 (GIILGVGVGVAIIELLGMVLSI). Over 251–267 (CLCRHVHSEDYSKVPKY) the chain is Cytoplasmic.

It belongs to the tetraspanin (TM4SF) family. Forms homooligomers. Interacts directly with IGSF8. Interacts with EGFR. Interacts with VEGFA and PDGFB. Interacts with ITGA4. Interacts with ITGA6; this interaction reduces ITGA6 cell surface expression. Interacts with ITGB1. Interacts with TLR4; this interaction inhibits TLR4-mediated signaling pathway. Interacts with TLR9. Interacts with PLAUR. Post-translationally, palmitoylated. Palmitoylation contributes to oligomerization and surface expression. Lymphoid specific.

It localises to the cell membrane. Its subcellular location is the cytoplasmic vesicle. The protein localises to the phagosome. Its function is as follows. Structural component of specialized membrane microdomains known as tetraspanin-enriched microdomains (TERMs), which act as platforms for receptor clustering and signaling. Participates thereby in diverse biological functions such as cell signal transduction, adhesion, migration and protein trafficking. Acts as a attenuator of EGF signaling, facilitating ligand-induced endocytosis of the receptor and its subsequent desensitization. Mechanistically, modulates ligand-induced ubiquitination and trafficking of EGFR via E3 ligase CBL phosphorylation by PKC. Increases cell-matrix adhesion by regulating the membrane organization of integrin alpha4/ITA4. Modulates adhesion and suppresses cell migration through other integrins such as the alpha6/ITGA6 and beta1/ITGB1. Decreases cell-associated plasminogen activation by interfering with the interaction between urokinase-type plasminogen activator/PLAU and its receptor PLAUR. Associates with CD4 or CD8 and delivers costimulatory signals for the TCR/CD3 pathway. Plays a role in TLR9 trafficking to acidified CpG-containing compartments by controlling interaction between TLR9 and VAMP3 and subsequent myddosome assembly. Inhibits LPS-induced inflammatory response by preventing binding of LPS to TLR4 on the cell surface. Plays a role in the activation of macrophages into anti-inflammatory phenotypes. Independently of Toll-like receptor (TLR) signaling, is recruited to pathogen-containing phagosomes prior to fusion with lysosomes and thereby participates in antigen presentation. Also acts to control angiogenesis and switch angiogenic milieu to quiescent state by binding and sequestering VEGFA and PDGFB to inhibit the signaling they trigger via their respective cell surface receptor. The protein is CD82 antigen (CD82) of Homo sapiens (Human).